We begin with the raw amino-acid sequence, 197 residues long: MKYSRKKLKNKVYLAIIDLPHGVKGDVLVKVWSAEPQRLKTYGILYDDTGRPYEIVVLRVQKNNAIVHFKGVEDRSAAEALKGIRLYVTRDQLVDDLAEDEFYQVDLIGLRVQDCAGQSLGKVSGFFNFGAGDLLEIRLNTRKTTVLIPFSKAAVPEICVTSGFLVVEPVAAGLLNNKEKNKVENDLDSNEDERMKK.

One can recognise a PRC barrel domain in the interval 99–174 (EDEFYQVDLI…LVVEPVAAGL (76 aa)).

Belongs to the RimM family. As to quaternary structure, binds ribosomal protein uS19.

The protein resides in the cytoplasm. Functionally, an accessory protein needed during the final step in the assembly of 30S ribosomal subunit, possibly for assembly of the head region. Essential for efficient processing of 16S rRNA. May be needed both before and after RbfA during the maturation of 16S rRNA. It has affinity for free ribosomal 30S subunits but not for 70S ribosomes. In Bartonella quintana (strain Toulouse) (Rochalimaea quintana), this protein is Ribosome maturation factor RimM.